A 178-amino-acid chain; its full sequence is ATP synthase subunit delta (178 aa).

This sequence belongs to the ATPase delta chain family. F-type ATPases have 2 components, F(1) - the catalytic core - and F(0) - the membrane proton channel. F(1) has five subunits: alpha(3), beta(3), gamma(1), delta(1), epsilon(1). F(0) has three main subunits: a(1), b(2) and c(10-14). The alpha and beta chains form an alternating ring which encloses part of the gamma chain. F(1) is attached to F(0) by a central stalk formed by the gamma and epsilon chains, while a peripheral stalk is formed by the delta and b chains.

It localises to the cell inner membrane. In terms of biological role, f(1)F(0) ATP synthase produces ATP from ADP in the presence of a proton or sodium gradient. F-type ATPases consist of two structural domains, F(1) containing the extramembraneous catalytic core and F(0) containing the membrane proton channel, linked together by a central stalk and a peripheral stalk. During catalysis, ATP synthesis in the catalytic domain of F(1) is coupled via a rotary mechanism of the central stalk subunits to proton translocation. Its function is as follows. This protein is part of the stalk that links CF(0) to CF(1). It either transmits conformational changes from CF(0) to CF(1) or is implicated in proton conduction. The chain is ATP synthase subunit delta from Laribacter hongkongensis (strain HLHK9).